Here is a 196-residue protein sequence, read N- to C-terminus: Alpha-crystallin A chain (196 aa).

Met1 is subject to N-acetylmethionine. Residues 1 to 63 (MDVTIQHPWF…RTVLDSGISE (63 aa)) are required for complex formation with BFSP1 and BFSP2. Residue Gln6 is modified to Deamidated glutamine; partial. A Phosphoserine modification is found at Ser45. Gln50 carries the post-translational modification Deamidated glutamine; partial. In terms of domain architecture, sHSP spans 76 to 185 (HAGNPKNNPV…GHSERAIPVS (110 aa)). Residues Lys93 and Lys122 each carry the N6-acetyllysine modification. Residue His123 coordinates Zn(2+). Residue Asn124 is modified to Deamidated asparagine; partial. Positions 125 and 130 each coordinate Zn(2+). Position 145 is a phosphoserine (Ser145). Asn146 carries the post-translational modification Deamidated asparagine; partial. The disordered stretch occupies residues 168–196 (KVQSGLDAGHSERAIPVSREEKPSSAPSS). Gln170 carries the post-translational modification Deamidated glutamine; partial. The segment covering 176–190 (GHSERAIPVSREEKP) has biased composition (basic and acidic residues). His177 contacts Zn(2+). A glycan (O-linked (GlcNAc) serine) is linked at Ser185.

Belongs to the small heat shock protein (HSP20) family. Heteropolymer composed of three CRYAA and one CRYAB subunits. Inter-subunit bridging via zinc ions enhances stability, which is crucial as there is no protein turn over in the lens. Can also form homodimers and homotetramers (dimers of dimers) which serve as the building blocks of homooligomers. Within homooligomers, the zinc-binding motif is created from residues of 3 different molecules. His-123 and Glu-125 from one molecule are ligands of the zinc ion, and His-130 and His-177 residues from additional molecules complete the site with tetrahedral coordination geometry. Part of a complex required for lens intermediate filament formation composed of BFSP1, BFSP2 and CRYAA. In terms of processing, acetylation at Lys-93 may increase chaperone activity. Post-translationally, undergoes age-dependent proteolytical cleavage at the C-terminus.

Its subcellular location is the cytoplasm. The protein resides in the nucleus. Its function is as follows. Contributes to the transparency and refractive index of the lens. Acts as a chaperone, preventing aggregation of various proteins under a wide range of stress conditions. Required for the correct formation of lens intermediate filaments as part of a complex composed of BFSP1, BFSP2 and CRYAA. This is Alpha-crystallin A chain (Cryaa) from Mus musculus (Mouse).